The primary structure comprises 238 residues: Ribonuclease PH (238 aa).

Residues Arg86 and 124–126 each bind phosphate; that span reads GTR.

The protein belongs to the RNase PH family. In terms of assembly, homohexameric ring arranged as a trimer of dimers.

The catalysed reaction is tRNA(n+1) + phosphate = tRNA(n) + a ribonucleoside 5'-diphosphate. Phosphorolytic 3'-5' exoribonuclease that plays an important role in tRNA 3'-end maturation. Removes nucleotide residues following the 3'-CCA terminus of tRNAs; can also add nucleotides to the ends of RNA molecules by using nucleoside diphosphates as substrates, but this may not be physiologically important. Probably plays a role in initiation of 16S rRNA degradation (leading to ribosome degradation) during starvation. The protein is Ribonuclease PH of Enterobacter sp. (strain 638).